A 234-amino-acid polypeptide reads, in one-letter code: Peroxiredoxin (234 aa).

Positions 6 to 161 (PLIGEKLPEM…ILRLLKALQV (156 aa)) constitute a Thioredoxin domain. Cys-48 (cysteine sulfenic acid (-SOH) intermediate) is an active-site residue. Arg-124 contributes to the substrate binding site. Cys-203 and Cys-209 are oxidised to a cystine.

Belongs to the peroxiredoxin family. Prx6 subfamily. Homodecamer. Pentamer of dimers that assemble into a ring structure.

It localises to the cytoplasm. The enzyme catalyses a hydroperoxide + [thioredoxin]-dithiol = an alcohol + [thioredoxin]-disulfide + H2O. Thiol-specific peroxidase that catalyzes the reduction of hydrogen peroxide and organic hydroperoxides to water and alcohols, respectively. Plays a role in cell protection against oxidative stress by detoxifying peroxides. The chain is Peroxiredoxin from Ignicoccus hospitalis (strain KIN4/I / DSM 18386 / JCM 14125).